The sequence spans 362 residues: Type II methyltransferase M.MamI (362 aa).

Belongs to the N(4)/N(6)-methyltransferase family.

It carries out the reaction a 2'-deoxyadenosine in DNA + S-adenosyl-L-methionine = an N(6)-methyl-2'-deoxyadenosine in DNA + S-adenosyl-L-homocysteine + H(+). A gamma subtype methylase that recognizes the double-stranded sequence 5'-GATNNNNATC-3', methylates A-? on both strands, and protects the DNA from cleavage by the MamI endonuclease. This is Type II methyltransferase M.MamI from Microbacterium ammoniaphilum.